A 136-amino-acid polypeptide reads, in one-letter code: Small ribosomal subunit protein uS19 (136 aa).

The protein belongs to the universal ribosomal protein uS19 family.

Protein S19 forms a complex with S13 that binds strongly to the 16S ribosomal RNA. The polypeptide is Small ribosomal subunit protein uS19 (Methanosphaera stadtmanae (strain ATCC 43021 / DSM 3091 / JCM 11832 / MCB-3)).